The following is a 157-amino-acid chain: Protein Smg (157 aa).

The protein belongs to the Smg family.

The sequence is that of Protein Smg from Pectobacterium carotovorum subsp. carotovorum (strain PC1).